The sequence spans 947 residues: Protocadherin alpha-4 (947 aa).

An N-terminal signal peptide occupies residues Met-1–Ser-29. Cadherin domains follow at residues Gln-30–Phe-133, Pro-134–Phe-242, Asp-243–Leu-350, Glu-351–Phe-455, Ala-456–Leu-565, and Ser-573–Arg-681. Over Gln-30 to Asn-697 the chain is Extracellular. An intrachain disulfide couples Cys-96 to Cys-102. Asn-257 and Asn-265 each carry an N-linked (GlcNAc...) asparagine glycan. A glycan (N-linked (GlcNAc...) asparagine) is linked at Asn-548. Residues Val-698–Tyr-718 form a helical membrane-spanning segment. Over Ser-719–Gln-947 the chain is Cytoplasmic. PXXP repeat units follow at residues Pro-734–Pro-737, Pro-774–Ser-777, Pro-796–Pro-799, Pro-829–Pro-832, Pro-870–Pro-873, and Pro-888–Pro-891. The segment at Pro-734 to Pro-891 is 6 X 4 AA repeats of P-X-X-P. The required for interaction with FYN stretch occupies residues Val-738–Gln-947. Disordered stretches follow at residues Gly-761–Tyr-805 and Ile-824–Pro-853. The disordered stretch occupies residues Arg-897–Gln-947. Residues Asp-906–Lys-920 are compositionally biased toward basic and acidic residues.

In terms of assembly, forms homodimers in trans (molecules expressed by two different cells). Forms promiscuous heterodimers in cis (at the plasma membrane of the same cell) with other protocadherins. Interacts with FYN. In terms of tissue distribution, detected in brain.

Its subcellular location is the cell membrane. In terms of biological role, calcium-dependent cell-adhesion protein involved in cells self-recognition and non-self discrimination. Thereby, it is involved in the establishment and maintenance of specific neuronal connections in the brain. In Rattus norvegicus (Rat), this protein is Protocadherin alpha-4.